The chain runs to 608 residues: Pentatricopeptide repeat-containing protein 1, apicoplast (608 aa).

PPR repeat units follow at residues 165-199, 200-230, 236-270, 336-370, 372-402, 410-445, and 446-480; these read TTLA…NIKP, DLVS…MIES, NYEI…PFVE, QYSE…GKYM, SIFV…LKND, NVNI…LLTP, and NNLS…KLLN.

Belongs to the PPR family. P subfamily. Homodimer.

Its subcellular location is the plastid. It localises to the apicoplast. Its function is as follows. Binds to apicoplast RNA transcripts, preferentially to the motif UUAU, and protects RNA transcripts from degradation by ribonuclease. The polypeptide is Pentatricopeptide repeat-containing protein 1, apicoplast (Plasmodium falciparum (isolate 3D7)).